A 128-amino-acid chain; its full sequence is Fluoride-specific ion channel FluC (128 aa).

Helical transmembrane passes span 4 to 24, 37 to 57, 72 to 92, and 101 to 121; these read LLLV…VGVQ, TFIV…WLAL, VGVM…ALMI, and FTYT…GLLI. 2 residues coordinate Na(+): glycine 76 and threonine 79.

Belongs to the fluoride channel Fluc/FEX (TC 1.A.43) family.

The protein resides in the cell inner membrane. The enzyme catalyses fluoride(in) = fluoride(out). With respect to regulation, na(+) is not transported, but it plays an essential structural role and its presence is essential for fluoride channel function. Functionally, fluoride-specific ion channel. Important for reducing fluoride concentration in the cell, thus reducing its toxicity. In Caulobacter sp. (strain K31), this protein is Fluoride-specific ion channel FluC.